A 483-amino-acid chain; its full sequence is Xylulose kinase (483 aa).

77–78 is a binding site for substrate; it reads MH. The active-site Proton acceptor is the Asp-233.

It belongs to the FGGY kinase family.

It carries out the reaction D-xylulose + ATP = D-xylulose 5-phosphate + ADP + H(+). Catalyzes the phosphorylation of D-xylulose to D-xylulose 5-phosphate. This is Xylulose kinase from Klebsiella pneumoniae.